We begin with the raw amino-acid sequence, 167 residues long: Leptin (167 aa).

Residues 1–21 (MRCGPLCRFLWLWPYLSCVEA) form the signal peptide. An intrachain disulfide couples cysteine 117 to cysteine 167.

This sequence belongs to the leptin family.

The protein localises to the secreted. Its function is as follows. Key player in the regulation of energy balance and body weight control. Once released into the circulation, has central and peripheral effects by binding LEPR, found in many tissues, which results in the activation of several major signaling pathways. In the hypothalamus, acts as an appetite-regulating factor that induces a decrease in food intake and an increase in energy consumption by inducing anorexinogenic factors and suppressing orexigenic neuropeptides, also regulates bone mass and secretion of hypothalamo-pituitary-adrenal hormones. In the periphery, increases basal metabolism, influences reproductive function, regulates pancreatic beta-cell function and insulin secretion, is pro-angiogenic for endothelial cell and affects innate and adaptive immunity. In the arcuate nucleus of the hypothalamus, activates by depolarization POMC neurons inducing FOS and SOCS3 expression to release anorexigenic peptides and inhibits by hyperpolarization NPY neurons inducing SOCS3 with a consequent reduction on release of orexigenic peptides. In addition to its known satiety inducing effect, has a modulatory role in nutrient absorption. In the intestine, reduces glucose absorption by enterocytes by activating PKC and leading to a sequential activation of p38, PI3K and ERK signaling pathways which exerts an inhibitory effect on glucose absorption. Acts as a growth factor on certain tissues, through the activation of different signaling pathways increases expression of genes involved in cell cycle regulation such as CCND1, via JAK2-STAT3 pathway, or VEGFA, via MAPK1/3 and PI3K-AKT1 pathways. May also play an apoptotic role via JAK2-STAT3 pathway and up-regulation of BIRC5 expression. Pro-angiogenic, has mitogenic activity on vascular endothelial cells and plays a role in matrix remodeling by regulating the expression of matrix metalloproteinases (MMPs) and tissue inhibitors of metalloproteinases (TIMPs). In innate immunity, modulates the activity and function of neutrophils by increasing chemotaxis and the secretion of oxygen radicals. Increases phagocytosis by macrophages and enhances secretion of pro-inflammatory mediators. Increases cytotoxic ability of NK cells. Plays a pro-inflammatory role, in synergy with IL1B, by inducing NOS2 which promotes the production of IL6, IL8 and Prostaglandin E2, through a signaling pathway that involves JAK2, PI3K, MAP2K1/MEK1 and MAPK14/p38. In adaptive immunity, promotes the switch of memory T-cells towards T helper-1 cell immune responses. Increases CD4(+)CD25(-) T-cell proliferation and reduces autophagy during TCR (T-cell receptor) stimulation, through MTOR signaling pathway activation and BCL2 up-regulation. The polypeptide is Leptin (LEP) (Canis lupus familiaris (Dog)).